The chain runs to 283 residues: ATP phosphoribosyltransferase (283 aa).

The protein belongs to the ATP phosphoribosyltransferase family. Long subfamily. Requires Mg(2+) as cofactor.

It localises to the cytoplasm. It carries out the reaction 1-(5-phospho-beta-D-ribosyl)-ATP + diphosphate = 5-phospho-alpha-D-ribose 1-diphosphate + ATP. The protein operates within amino-acid biosynthesis; L-histidine biosynthesis; L-histidine from 5-phospho-alpha-D-ribose 1-diphosphate: step 1/9. Feedback inhibited by histidine. Catalyzes the condensation of ATP and 5-phosphoribose 1-diphosphate to form N'-(5'-phosphoribosyl)-ATP (PR-ATP). Has a crucial role in the pathway because the rate of histidine biosynthesis seems to be controlled primarily by regulation of HisG enzymatic activity. This chain is ATP phosphoribosyltransferase, found in Azobacteroides pseudotrichonymphae genomovar. CFP2.